The sequence spans 381 residues: Peptidoglycan glycosyltransferase MrdB (381 aa).

A run of 10 helical transmembrane segments spans residues 11–31 (FDLL…LLIF), 40–60 (KQGV…FIPF), 66–86 (WLFA…FMGS), 102–122 (ITLQ…AHLI), 132–152 (YDWG…ALIL), 156–176 (DLGT…IVGL), 180–200 (VWLP…HFLH), 263–283 (FGFL…LHLF), 297–317 (IVAL…IAMT), and 328–348 (LPLF…FAIL).

It belongs to the SEDS family. MrdB/RodA subfamily.

It is found in the cell inner membrane. It carries out the reaction [GlcNAc-(1-&gt;4)-Mur2Ac(oyl-L-Ala-gamma-D-Glu-L-Lys-D-Ala-D-Ala)](n)-di-trans,octa-cis-undecaprenyl diphosphate + beta-D-GlcNAc-(1-&gt;4)-Mur2Ac(oyl-L-Ala-gamma-D-Glu-L-Lys-D-Ala-D-Ala)-di-trans,octa-cis-undecaprenyl diphosphate = [GlcNAc-(1-&gt;4)-Mur2Ac(oyl-L-Ala-gamma-D-Glu-L-Lys-D-Ala-D-Ala)](n+1)-di-trans,octa-cis-undecaprenyl diphosphate + di-trans,octa-cis-undecaprenyl diphosphate + H(+). It participates in cell wall biogenesis; peptidoglycan biosynthesis. Peptidoglycan polymerase that is essential for cell wall elongation. In Helicobacter pylori (strain J99 / ATCC 700824) (Campylobacter pylori J99), this protein is Peptidoglycan glycosyltransferase MrdB.